Consider the following 589-residue polypeptide: Phenylalanine--tRNA ligase beta subunit (589 aa).

Residues 302–379 (LAYRKEMVRA…IAYGYSNIQM (78 aa)) enclose the B5 domain. Mg(2+) is bound by residues Asp-357, Asp-363, Glu-366, and Asp-367.

The protein belongs to the phenylalanyl-tRNA synthetase beta subunit family. Type 2 subfamily. In terms of assembly, heterotetramer; dimer of two heterodimers formed by FARSA and FARSB. Mg(2+) serves as cofactor.

It is found in the cytoplasm. It catalyses the reaction tRNA(Phe) + L-phenylalanine + ATP = L-phenylalanyl-tRNA(Phe) + AMP + diphosphate + H(+). This Pongo abelii (Sumatran orangutan) protein is Phenylalanine--tRNA ligase beta subunit (FARSB).